The sequence spans 131 residues: Profilin-2 (131 aa).

A disulfide bridge connects residues Cys-13 and Cys-115. The Involved in PIP2 interaction signature appears at 81 to 97; sequence AVIRGKKGAGGITIKKT. Thr-111 carries the post-translational modification Phosphothreonine.

It belongs to the profilin family. As to quaternary structure, occurs in many kinds of cells as a complex with monomeric actin in a 1:1 ratio. Post-translationally, phosphorylated by MAP kinases.

The protein localises to the cytoplasm. It is found in the cytoskeleton. Its function is as follows. Binds to actin and affects the structure of the cytoskeleton. At high concentrations, profilin prevents the polymerization of actin, whereas it enhances it at low concentrations. By binding to PIP2, it inhibits the formation of IP3 and DG. The chain is Profilin-2 (PRO2) from Phleum pratense (Common timothy).